A 168-amino-acid polypeptide reads, in one-letter code: Photosystem I assembly protein Ycf3 (168 aa).

3 TPR repeats span residues 35 to 68, 72 to 105, and 120 to 153; these read AFTY…EIDP, SYIL…NPFL, and GEQA…TPGN.

Belongs to the Ycf3 family.

It is found in the plastid. Its subcellular location is the chloroplast thylakoid membrane. Its function is as follows. Essential for the assembly of the photosystem I (PSI) complex. May act as a chaperone-like factor to guide the assembly of the PSI subunits. In Solanum bulbocastanum (Wild potato), this protein is Photosystem I assembly protein Ycf3.